The chain runs to 75 residues: RNA-binding protein KhpA (75 aa).

Residues 29–75 (SIIIELKVAPEDMGKVIGKQGRIAQAIRTLVKAAALKEKKRVIVEII) form the KH domain.

Belongs to the KhpA RNA-binding protein family. As to quaternary structure, forms a complex with KhpB.

It is found in the cytoplasm. In terms of biological role, a probable RNA chaperone. Forms a complex with KhpB which binds to cellular RNA and controls its expression. Plays a role in peptidoglycan (PG) homeostasis and cell length regulation. The polypeptide is RNA-binding protein KhpA (Caldanaerobacter subterraneus subsp. tengcongensis (strain DSM 15242 / JCM 11007 / NBRC 100824 / MB4) (Thermoanaerobacter tengcongensis)).